A 280-amino-acid polypeptide reads, in one-letter code: UPF0276 protein CC_3255 (280 aa).

Belongs to the UPF0276 family.

The protein is UPF0276 protein CC_3255 of Caulobacter vibrioides (strain ATCC 19089 / CIP 103742 / CB 15) (Caulobacter crescentus).